Here is a 26-residue protein sequence, read N- to C-terminus: Dermaseptin-J3 (26 aa).

The residue at position 26 (V26) is a Valine amide.

Expressed by the skin glands.

Its subcellular location is the secreted. Has antimicrobial activity. The chain is Dermaseptin-J3 from Phasmahyla jandaia (Jandaia leaf frog).